Reading from the N-terminus, the 677-residue chain is Secretogranin-1 (677 aa).

Residues 1–20 (MQPAMLLGLLGAAALAAVSS) form the signal peptide. An intrachain disulfide couples Cys36 to Cys57. 2 disordered regions span residues 63-505 (KSGK…RQYE) and 531-558 (NSDF…VTLT). Residues 64–90 (SGKEVKGEEKGENQNSKFEVRLLRDPA) show a composition bias toward basic and acidic residues. Phosphoserine occurs at positions 93, 99, and 100. Ser93 is a glycosylation site (O-linked (Xyl...) (chondroitin sulfate) serine). O-linked (GalNAc...) threonine glycosylation occurs at Thr115. Residues 118–133 (GNEKWTEGGGHSREGV) are compositionally biased toward basic and acidic residues. 4 positions are modified to phosphoserine: Ser129, Ser147, Ser190, and Ser220. Composition is skewed to basic and acidic residues over residues 148–192 (KEAK…DSGE) and 200–249 (KRSE…KPQE). O-linked (Xyl...) (chondroitin sulfate) serine glycosylation occurs at Ser237. Acidic residues predominate over residues 251–280 (TDQDQSQEESQEGEEGEEGEEGEEGEEDSA). A phosphoserine mark is found at Ser256, Ser260, Ser300, Ser301, Ser318, and Ser342. The segment covering 306-322 (PLSEERRPSPKESKEAD) has biased composition (basic and acidic residues). Residue Tyr348 is modified to Sulfotyrosine. 2 stretches are compositionally biased toward basic and acidic residues: residues 363–409 (RGSE…ERSY) and 421–455 (GREP…DTAK). Residues Ser365, Ser375, and Ser378 each carry the phosphoserine modification. Tyr472 carries the post-translational modification Sulfotyrosine. Positions 491-504 (EESREEVRFPDRQY) are enriched in basic and acidic residues. Phosphoserine is present on residues Ser493, Ser532, and Ser543. Tyr566 and Tyr624 each carry sulfotyrosine. The tract at residues 622-646 (DFYDSEEQMGPHQEANDEKARADQR) is disordered. At Ser626 the chain carries Phosphoserine. A compositionally biased stretch (basic and acidic residues) spans 635–646 (EANDEKARADQR).

This sequence belongs to the chromogranin/secretogranin protein family. Interacts with ITPR1 in the secretory granules.

Its subcellular location is the secreted. Secretogranin-1 is a neuroendocrine secretory granule protein, which may be the precursor for other biologically active peptides. This is Secretogranin-1 (Chgb) from Mus musculus (Mouse).